Here is a 485-residue protein sequence, read N- to C-terminus: Aspartyl/glutamyl-tRNA(Asn/Gln) amidotransferase subunit B (485 aa).

The protein belongs to the GatB/GatE family. GatB subfamily. Heterotrimer of A, B and C subunits.

It carries out the reaction L-glutamyl-tRNA(Gln) + L-glutamine + ATP + H2O = L-glutaminyl-tRNA(Gln) + L-glutamate + ADP + phosphate + H(+). The enzyme catalyses L-aspartyl-tRNA(Asn) + L-glutamine + ATP + H2O = L-asparaginyl-tRNA(Asn) + L-glutamate + ADP + phosphate + 2 H(+). Functionally, allows the formation of correctly charged Asn-tRNA(Asn) or Gln-tRNA(Gln) through the transamidation of misacylated Asp-tRNA(Asn) or Glu-tRNA(Gln) in organisms which lack either or both of asparaginyl-tRNA or glutaminyl-tRNA synthetases. The reaction takes place in the presence of glutamine and ATP through an activated phospho-Asp-tRNA(Asn) or phospho-Glu-tRNA(Gln). This Cupriavidus taiwanensis (strain DSM 17343 / BCRC 17206 / CCUG 44338 / CIP 107171 / LMG 19424 / R1) (Ralstonia taiwanensis (strain LMG 19424)) protein is Aspartyl/glutamyl-tRNA(Asn/Gln) amidotransferase subunit B.